The chain runs to 187 residues: Putative protein 2 (187 aa).

Helical transmembrane passes span 10 to 27 (MLAA…NVGV) and 99 to 121 (VTII…LLLV).

This sequence belongs to the TMEM9 family.

The protein resides in the membrane. This chain is Putative protein 2, found in Takifugu rubripes (Japanese pufferfish).